The sequence spans 98 residues: Thrombin-like enzyme cerastotin (98 aa).

The Peptidase S1 domain maps to 1-98; it reads VIGGAECNIN…IKKPVNGSTH (98 aa). Catalysis depends on charge relay system residues His-41 and Asp-85. Residue Asn-94 is glycosylated (N-linked (GlcNAc...) asparagine).

This sequence belongs to the peptidase S1 family. Snake venom subfamily. In terms of assembly, monomer. In terms of tissue distribution, expressed by the venom gland.

Its subcellular location is the secreted. With respect to regulation, inhibited by PMSF. Its function is as follows. Thrombin-like snake venom serine protease that preferentially cleaves the alpha-chain of fibrinogen (FGA). Induce platelet aggregation in the presence of exogenous fibrinogen. Possesses esterase and amidolytic activities. This Cerastes cerastes (Horned desert viper) protein is Thrombin-like enzyme cerastotin.